A 90-amino-acid polypeptide reads, in one-letter code: Small ribosomal subunit protein bS16 (90 aa).

It belongs to the bacterial ribosomal protein bS16 family.

The sequence is that of Small ribosomal subunit protein bS16 from Moorella thermoacetica (strain ATCC 39073 / JCM 9320).